The following is a 264-amino-acid chain: GTP cyclohydrolase FolE2 (264 aa).

It belongs to the GTP cyclohydrolase IV family.

It catalyses the reaction GTP + H2O = 7,8-dihydroneopterin 3'-triphosphate + formate + H(+). The protein operates within cofactor biosynthesis; 7,8-dihydroneopterin triphosphate biosynthesis; 7,8-dihydroneopterin triphosphate from GTP: step 1/1. Functionally, converts GTP to 7,8-dihydroneopterin triphosphate. In Ruthia magnifica subsp. Calyptogena magnifica, this protein is GTP cyclohydrolase FolE2.